The chain runs to 246 residues: Ribonuclease 3 (246 aa).

In terms of domain architecture, RNase III spans 16 to 144 (LLEFQKQAGL…VIGAYYIDSG (129 aa)). Mg(2+) is bound at residue glutamate 57. The active site involves aspartate 61. Aspartate 130 and glutamate 133 together coordinate Mg(2+). Residue glutamate 133 is part of the active site. The DRBM domain occupies 171–240 (DYKSLLQELV…AKVAYENLCS (70 aa)).

The protein belongs to the ribonuclease III family. As to quaternary structure, homodimer. Mg(2+) serves as cofactor.

The protein localises to the cytoplasm. The enzyme catalyses Endonucleolytic cleavage to 5'-phosphomonoester.. Functionally, digests double-stranded RNA. Involved in the processing of primary rRNA transcript to yield the immediate precursors to the large and small rRNAs (23S and 16S). Processes some mRNAs, and tRNAs when they are encoded in the rRNA operon. Processes pre-crRNA and tracrRNA of type II CRISPR loci if present in the organism. The protein is Ribonuclease 3 of Treponema denticola (strain ATCC 35405 / DSM 14222 / CIP 103919 / JCM 8153 / KCTC 15104).